The primary structure comprises 334 residues: Beta-ketoacyl-[acyl-carrier-protein] synthase III (334 aa).

Catalysis depends on residues Cys-114 and His-253. The interval 254-258 (QANIR) is ACP-binding. Asn-283 is an active-site residue.

This sequence belongs to the thiolase-like superfamily. FabH family. As to quaternary structure, homodimer.

The protein resides in the cytoplasm. The enzyme catalyses malonyl-[ACP] + acetyl-CoA + H(+) = 3-oxobutanoyl-[ACP] + CO2 + CoA. The protein operates within lipid metabolism; fatty acid biosynthesis. In terms of biological role, catalyzes the condensation reaction of fatty acid synthesis by the addition to an acyl acceptor of two carbons from malonyl-ACP. Catalyzes the first condensation reaction which initiates fatty acid synthesis and may therefore play a role in governing the total rate of fatty acid production. Possesses both acetoacetyl-ACP synthase and acetyl transacylase activities. Its substrate specificity determines the biosynthesis of branched-chain and/or straight-chain of fatty acids. The chain is Beta-ketoacyl-[acyl-carrier-protein] synthase III from Campylobacter curvus (strain 525.92).